A 328-amino-acid polypeptide reads, in one-letter code: GMP reductase (328 aa).

The active-site Thioimidate intermediate is C176. NADP(+) is bound at residue 205-228; that stretch reads IIADGGIRTHGDIAKSIRFGASMI.

It belongs to the IMPDH/GMPR family. GuaC type 2 subfamily.

The catalysed reaction is IMP + NH4(+) + NADP(+) = GMP + NADPH + 2 H(+). In terms of biological role, catalyzes the irreversible NADPH-dependent deamination of GMP to IMP. It functions in the conversion of nucleobase, nucleoside and nucleotide derivatives of G to A nucleotides, and in maintaining the intracellular balance of A and G nucleotides. In Streptococcus pneumoniae (strain P1031), this protein is GMP reductase.